The primary structure comprises 1048 residues: Nonsense-mediated mRNA decay protein 5 (1048 aa).

The Importin N-terminal domain occupies 24-104; that stretch reads AETHLKNASK…KDMLIKTMVS (81 aa). Residue serine 977 is modified to Phosphoserine.

As to quaternary structure, GTP-bound Ran dissociates the isolated NMD5/TFIIS complex.

It localises to the nucleus. Its subcellular location is the cytoplasm. Its function is as follows. Active in protein import into the nucleus. Its major import substrate is transcription elongation factor TFIIS. This Saccharomyces cerevisiae (strain ATCC 204508 / S288c) (Baker's yeast) protein is Nonsense-mediated mRNA decay protein 5 (NMD5).